A 55-amino-acid chain; its full sequence is uncharacterized protein (55 aa).

This is an uncharacterized protein from Acidianus hospitalis (AFV-1).